Consider the following 117-residue polypeptide: Immunoglobulin lambda variable 6-57 (117 aa).

The signal sequence occupies residues 1–19; the sequence is MAWAPLLLTLLAHCTGSWA. The tract at residues 20 to 44 is framework-1; sequence NFMLTQPHSVSESPGKTVTISCTGS. The Ig-like domain maps to 20–117; sequence NFMLTQPHSV…YYCQSYDSSN (98 aa). A disulfide bridge links Cys41 with Cys110. The tract at residues 45-52 is complementarity-determining-1; it reads SGSIASNY. A framework-2 region spans residues 53 to 69; it reads VQWYQQRPGSAPTTVIY. The disordered stretch occupies residues 65 to 97; the sequence is TTVIYEDNQRPSGVPDRFSGSIDSSSNSASLTI. A complementarity-determining-2 region spans residues 70 to 72; it reads EDN. The tract at residues 73–110 is framework-3; it reads QRPSGVPDRFSGSIDSSSNSASLTISGLKTEDEADYYC. The segment covering 83-97 has biased composition (low complexity); that stretch reads SGSIDSSSNSASLTI. Residues 111-117 form a complementarity-determining-3 region; it reads QSYDSSN.

In terms of assembly, immunoglobulins are composed of two identical heavy chains and two identical light chains; disulfide-linked.

The protein localises to the secreted. It localises to the cell membrane. In terms of biological role, v region of the variable domain of immunoglobulin light chains that participates in the antigen recognition. Immunoglobulins, also known as antibodies, are membrane-bound or secreted glycoproteins produced by B lymphocytes. In the recognition phase of humoral immunity, the membrane-bound immunoglobulins serve as receptors which, upon binding of a specific antigen, trigger the clonal expansion and differentiation of B lymphocytes into immunoglobulins-secreting plasma cells. Secreted immunoglobulins mediate the effector phase of humoral immunity, which results in the elimination of bound antigens. The antigen binding site is formed by the variable domain of one heavy chain, together with that of its associated light chain. Thus, each immunoglobulin has two antigen binding sites with remarkable affinity for a particular antigen. The variable domains are assembled by a process called V-(D)-J rearrangement and can then be subjected to somatic hypermutations which, after exposure to antigen and selection, allow affinity maturation for a particular antigen. This chain is Immunoglobulin lambda variable 6-57, found in Homo sapiens (Human).